The chain runs to 456 residues: Probable polygalacturonase At3g15720 (456 aa).

The N-terminal stretch at 1 to 23 is a signal peptide; the sequence is MKKKTWFLNFSLFFLQIFTSSNA. PbH1 repeat units follow at residues 169 to 195, 196 to 217, 219 to 239, 249 to 270, 278 to 299, and 314 to 341; these read CNYV…DVGA, SSNV…AINS, TSNI…SIGS, VENV…RIKT, ARMI…IIDQ, and SSAV…DFRC. Aspartate 210 serves as the catalytic Proton donor. Residue histidine 233 is part of the active site.

The protein belongs to the glycosyl hydrolase 28 family.

The protein resides in the secreted. Its subcellular location is the cell wall. It catalyses the reaction (1,4-alpha-D-galacturonosyl)n+m + H2O = (1,4-alpha-D-galacturonosyl)n + (1,4-alpha-D-galacturonosyl)m.. This Arabidopsis thaliana (Mouse-ear cress) protein is Probable polygalacturonase At3g15720.